We begin with the raw amino-acid sequence, 318 residues long: MSNIIKYKKKILNGDLLTKEEVEEILEEDITDLAATANEIRESLCGNKFDLCTIINGKSGRCQENCKYCAQSAHFDTDIIEYNILNSDRIINSAISNYNKGVHRFSVVTSGRALNNNEVDTLCKTYSKLKETCSIRLCASHGLLKYEDLKRLKDSGVTRYHNNLETSRKFFTKICTTHKYDDKIETIKNAKKAGLEICSGGIIGLGETMEDRIDMAFTLRELSVESVPVNILNPIKGTPLENQEILSYEEIIKTLALFRFILPTVQIRLAGGRTIISDNGKKALESGVNGAISGDMLTTLGIETSEDIKMIKNLGFEV.

One can recognise a Radical SAM core domain in the interval 44 to 273 (LCGNKFDLCT…TVQIRLAGGR (230 aa)). Cys62, Cys66, and Cys69 together coordinate [4Fe-4S] cluster. [2Fe-2S] cluster-binding residues include Ser106, Cys138, Cys198, and Arg268.

The protein belongs to the radical SAM superfamily. Biotin synthase family. As to quaternary structure, homodimer. Requires [4Fe-4S] cluster as cofactor. The cofactor is [2Fe-2S] cluster.

The enzyme catalyses (4R,5S)-dethiobiotin + (sulfur carrier)-SH + 2 reduced [2Fe-2S]-[ferredoxin] + 2 S-adenosyl-L-methionine = (sulfur carrier)-H + biotin + 2 5'-deoxyadenosine + 2 L-methionine + 2 oxidized [2Fe-2S]-[ferredoxin]. It participates in cofactor biosynthesis; biotin biosynthesis; biotin from 7,8-diaminononanoate: step 2/2. Functionally, catalyzes the conversion of dethiobiotin (DTB) to biotin by the insertion of a sulfur atom into dethiobiotin via a radical-based mechanism. In Clostridium botulinum (strain Langeland / NCTC 10281 / Type F), this protein is Biotin synthase.